The chain runs to 227 residues: PKHD-type hydroxylase Bxeno_B2756 (227 aa).

A Fe2OG dioxygenase domain is found at 80-179; it reads QVYPPLFNRY…RVASFFWVQS (100 aa). The Fe cation site is built by H98, D100, and H160. R170 contributes to the 2-oxoglutarate binding site.

It depends on Fe(2+) as a cofactor. L-ascorbate serves as cofactor.

The polypeptide is PKHD-type hydroxylase Bxeno_B2756 (Paraburkholderia xenovorans (strain LB400)).